A 190-amino-acid chain; its full sequence is Superoxide dismutase [Cu-Zn] (190 aa).

A signal peptide spans 1–23 (MKLTNLALAFTLFGASAVAFAHA). Cu cation is bound by residues H83, H85, and H108. A disulfide bridge links C90 with C186. Zn(2+)-binding residues include H108, H117, H126, and D129. Residues 162–181 (MIHEGGDNHSDHPAPLGGGG) are disordered. H164 is a binding site for Cu cation.

This sequence belongs to the Cu-Zn superoxide dismutase family. As to quaternary structure, homodimer. Requires Cu cation as cofactor. Zn(2+) is required as a cofactor.

It is found in the periplasm. The catalysed reaction is 2 superoxide + 2 H(+) = H2O2 + O2. Destroys radicals which are normally produced within the cells and which are toxic to biological systems. The polypeptide is Superoxide dismutase [Cu-Zn] (sodC) (Actinobacillus pleuropneumoniae (Haemophilus pleuropneumoniae)).